A 118-amino-acid chain; its full sequence is Large ribosomal subunit protein uL22c (118 aa).

The protein belongs to the universal ribosomal protein uL22 family. As to quaternary structure, part of the 50S ribosomal subunit.

Its subcellular location is the plastid. The protein localises to the organellar chromatophore. Its function is as follows. This protein binds specifically to 23S rRNA. In terms of biological role, the globular domain of the protein is located near the polypeptide exit tunnel on the outside of the subunit, while an extended beta-hairpin is found that lines the wall of the exit tunnel in the center of the 70S ribosome. The chain is Large ribosomal subunit protein uL22c (rpl22) from Paulinella chromatophora.